We begin with the raw amino-acid sequence, 312 residues long: Taste receptor type 2 member 135 (312 aa).

The Extracellular portion of the chain corresponds to 1-19 (MSTGHTVLGCQTTDKTVVT). Residues 20-40 (LFIILVLLCLVAVVGNGFIII) traverse the membrane as a helical segment. Over 41–66 (ALGMKWLLRRTLSAHNKLLISLAASR) the chain is Cytoplasmic. A helical transmembrane segment spans residues 67 to 87 (FCLQCVVIGKNIYVFLNPTSF). Residues 88–97 (PYNPVIQLLN) lie on the Extracellular side of the membrane. The helical transmembrane segment at 98 to 118 (LMWDFLTAATIWLCSLLGFFY) threads the bilayer. The Cytoplasmic portion of the chain corresponds to 119–140 (CVKIATLTHPVFVWLKYRLPGW). Residues 141–161 (VPWMLLSAVGMSSLTSILCFI) traverse the membrane as a helical segment. Residues 162-198 (GNYMIYQNHAKSGHQPWNVTGNSLRHSLEKFYFFSIK) lie on the Extracellular side of the membrane. N179 carries N-linked (GlcNAc...) asparagine glycosylation. The chain crosses the membrane as a helical span at residues 199 to 219 (IIMWTIPTVVFSIFMSLLLVS). Topologically, residues 220 to 244 (LVRHMKKTFLALSELRDVWAQAHFK) are cytoplasmic. The chain crosses the membrane as a helical span at residues 245-265 (ALLPLLSFIVLFISCFLTLVL). At 266–277 (SSASNTPYQEFR) the chain is on the extracellular side. The chain crosses the membrane as a helical span at residues 278–298 (YWMWQVVIHLCTVIHPIVILF). Residues 299-312 (SNPVLRVVIKRGCC) are Cytoplasmic-facing.

It belongs to the G-protein coupled receptor T2R family.

The protein resides in the membrane. Functionally, putative taste receptor which may play a role in the perception of bitterness. The protein is Taste receptor type 2 member 135 (Tas2r135) of Mus musculus (Mouse).